A 317-amino-acid chain; its full sequence is MHNYLDFEKPISDLEGKILELKKLASEDESVNTSDEIARLEGRVRDAMVEIYSKLSPWQKTQVARHPSRPHFLDYASRLFTEFTPLAGDRNFANDDAIQAGLARFHGTPVAVIGQEKGNDTKSRIKHNFGSPRPEGYRKATRIMEMADRFGLPLITLVDTAGAYPGVNAEERGQAEAIARSTEMCLNVKVPIVTVVIGEGGSGGAIAIATGNRVYMLEHAIYSVISPEGAASILWRDSTRAKEAASNMKITAEDLKSLGVIDGIIPEPVGGAHRDPDAVISRTETVIGDALKELSARNGDELRADRRQKYLNIGRNL.

The CoA carboxyltransferase C-terminal domain maps to 40–293 (LEGRVRDAMV…ETVIGDALKE (254 aa)).

Belongs to the AccA family. In terms of assembly, acetyl-CoA carboxylase is a heterohexamer composed of biotin carboxyl carrier protein (AccB), biotin carboxylase (AccC) and two subunits each of ACCase subunit alpha (AccA) and ACCase subunit beta (AccD).

It localises to the cytoplasm. The catalysed reaction is N(6)-carboxybiotinyl-L-lysyl-[protein] + acetyl-CoA = N(6)-biotinyl-L-lysyl-[protein] + malonyl-CoA. It functions in the pathway lipid metabolism; malonyl-CoA biosynthesis; malonyl-CoA from acetyl-CoA: step 1/1. Component of the acetyl coenzyme A carboxylase (ACC) complex. First, biotin carboxylase catalyzes the carboxylation of biotin on its carrier protein (BCCP) and then the CO(2) group is transferred by the carboxyltransferase to acetyl-CoA to form malonyl-CoA. The sequence is that of Acetyl-coenzyme A carboxylase carboxyl transferase subunit alpha from Rhizobium meliloti (strain 1021) (Ensifer meliloti).